The following is a 399-amino-acid chain: MAKEKFSRNKPHVNIGTIGHVDHGKTTLTAAISAVLSRKGLAELKDYDNIDNAPEEKERGITIATSHIEYETEKRHYAHVDCPGHADYVKNMITGAAQMDGAILVVSAADGPMPQTREHILLSRQVGVPYIVVFMNKADMVDDAELLELVEMEIRELLNEYNFPGDDTPIVSGSALKALEEAKAGQDGEWSAKIMELMDAVDSYIPTPVRATDKDLLMPIEDVFSISGRGTVVTGRIEKGVVKVGDTIEIVGIKPTQTTTVTGVEMFRKEMDQGEAGDNVGVLLRGTKKEDVERGMVLCKPKSITPHTKFEGEVYILTKEEGGRHTPFFNNYRPQFYVRTTDVTGSITLPEGTEMVMPGDNVRISVELIAPVALEEGTRFAIREGGRTVGSGVVSKILG.

The tr-type G domain maps to 10-209 (KPHVNIGTIG…AVDSYIPTPV (200 aa)). Positions 19–26 (GHVDHGKT) are G1. Position 19-26 (19-26 (GHVDHGKT)) interacts with GTP. Threonine 26 contributes to the Mg(2+) binding site. The G2 stretch occupies residues 60–64 (GITIA). Residues 81–84 (DCPG) form a G3 region. GTP is bound by residues 81–85 (DCPGH) and 136–139 (NKAD). Residues 136–139 (NKAD) form a G4 region. The interval 174–176 (SAL) is G5.

Belongs to the TRAFAC class translation factor GTPase superfamily. Classic translation factor GTPase family. EF-Tu/EF-1A subfamily. Monomer.

It is found in the cytoplasm. It catalyses the reaction GTP + H2O = GDP + phosphate + H(+). Its function is as follows. GTP hydrolase that promotes the GTP-dependent binding of aminoacyl-tRNA to the A-site of ribosomes during protein biosynthesis. In Campylobacter concisus (strain 13826), this protein is Elongation factor Tu.